The following is a 358-amino-acid chain: Dynein axonemal assembly factor 10 (358 aa).

6 WD repeats span residues 63–105 (EKKH…QPVF), 109–154 (AHAS…APVA), 162–205 (NNVR…VRWE), 207–249 (NVRN…PKKG), 258–298 (TAGA…QRKV), and 320–358 (ISTQ…LNKV).

As to quaternary structure, interacts with PIH1D1; the interaction associates DNAAF10 with the R2TP complex. Interacts with several dynein axonemal assembly factors.

The protein localises to the dynein axonemal particle. Functionally, key assembly factor specifically required for the stability of axonemal dynein heavy chains in cytoplasm. This chain is Dynein axonemal assembly factor 10 (dnaaf10), found in Chlamydomonas reinhardtii (Chlamydomonas smithii).